Here is a 329-residue protein sequence, read N- to C-terminus: Short-chain dehydrogenase/reductase prx4 (329 aa).

Residues serine 58, isoleucine 60, and asparagine 81 each contribute to the NADP(+) site. N-linked (GlcNAc...) asparagine glycosylation occurs at asparagine 91. Residues aspartate 98, asparagine 121, lysine 161, tyrosine 194, lysine 198, and threonine 229 each contribute to the NADP(+) site. Residue tyrosine 194 is the Proton acceptor of the active site. Lysine 198 (lowers pKa of active site Tyr) is an active-site residue. Residues 238 to 258 (GPLMAAGLPVSSAHMVGLAVV) form a helical membrane-spanning segment.

Belongs to the short-chain dehydrogenases/reductases (SDR) family.

It is found in the membrane. Its pathway is sesquiterpene biosynthesis. Functionally, short-chain dehydrogenase/reductase; part of the gene cluster that mediates the biosynthesis of PR-toxin, a bicyclic sesquiterpene belonging to the eremophilane class and acting as a mycotoxin. The first step of the pathway is catalyzed by the aristolochene synthase which performs the cyclization of trans,trans-farnesyl diphosphate (FPP) to the bicyclic sesquiterpene aristolochene. Following the formation of aristolochene, the non-oxygenated aristolochene is converted to the trioxygenated intermediate eremofortin B, via 7-epi-neopetasone. This conversion appears to involve three enzymes, a hydroxysterol oxidase-like enzyme, the quinone-oxidase prx3 that forms the quinone-type-structure in the bicyclic nucleus of aristolochene with the C8-oxo group and the C-3 hydroxyl group, and the P450 monooxygenase ORF6 that introduces the epoxide at the double bond between carbons 1 and 2. No monoxy or dioxy-intermediates have been reported to be released to the broth, so these three early oxidative reactions may be coupled together. Eremofortin B is further oxidized by another P450 monooxygenase, that introduces a second epoxide between carbons 7 and 11 prior to acetylation to eremofortin A by the acetyltransferase ORF8. The second epoxidation may be performed by a second P450 monooxygenase. After the acetylation step, eremofortin A is converted to eremofortin C and then to PR-toxin. First the conversion of eremofortin A to eremofortin C proceeds by oxidation of the side chain of the molecule at C-12 and is catalyzed by the short-chain oxidoreductase prx1. The cytochrome P450 monooxygenase ORF6 is probably also involved in this step. The primary alcohol formed at C-12 is finally oxidized by the short-chain alcohol dehydrogenase prx4 that forms PR-toxin. In Penicillium roqueforti, this protein is Short-chain dehydrogenase/reductase prx4.